A 227-amino-acid polypeptide reads, in one-letter code: Cytochrome c oxidase subunit 2 (227 aa).

The Mitochondrial intermembrane segment spans residues 1 to 14; sequence MAYPFQLGLQDATS. Residues 15-45 form a helical membrane-spanning segment; that stretch reads PIMEELLHFHDHTLMIVFLISSLVLYIISLM. Residues 46-59 lie on the Mitochondrial matrix side of the membrane; it reads LTTKLTHTSTMDAQ. Residues 60–87 traverse the membrane as a helical segment; sequence EVETVWTILPAIILILIALPSLRILYMM. Topologically, residues 88-227 are mitochondrial intermembrane; sequence DEINNPSLTV…YFETWSAVMV (140 aa). Residues His161, Cys196, Glu198, Cys200, His204, and Met207 each contribute to the Cu cation site. Mg(2+) is bound at residue Glu198. Tyr218 is subject to Phosphotyrosine.

This sequence belongs to the cytochrome c oxidase subunit 2 family. As to quaternary structure, component of the cytochrome c oxidase (complex IV, CIV), a multisubunit enzyme composed of 14 subunits. The complex is composed of a catalytic core of 3 subunits MT-CO1, MT-CO2 and MT-CO3, encoded in the mitochondrial DNA, and 11 supernumerary subunits COX4I, COX5A, COX5B, COX6A, COX6B, COX6C, COX7A, COX7B, COX7C, COX8 and NDUFA4, which are encoded in the nuclear genome. The complex exists as a monomer or a dimer and forms supercomplexes (SCs) in the inner mitochondrial membrane with NADH-ubiquinone oxidoreductase (complex I, CI) and ubiquinol-cytochrome c oxidoreductase (cytochrome b-c1 complex, complex III, CIII), resulting in different assemblies (supercomplex SCI(1)III(2)IV(1) and megacomplex MCI(2)III(2)IV(2)). Found in a complex with TMEM177, COA6, COX18, COX20, SCO1 and SCO2. Interacts with TMEM177 in a COX20-dependent manner. Interacts with COX20. Interacts with COX16. Cu cation serves as cofactor.

It localises to the mitochondrion inner membrane. The catalysed reaction is 4 Fe(II)-[cytochrome c] + O2 + 8 H(+)(in) = 4 Fe(III)-[cytochrome c] + 2 H2O + 4 H(+)(out). In terms of biological role, component of the cytochrome c oxidase, the last enzyme in the mitochondrial electron transport chain which drives oxidative phosphorylation. The respiratory chain contains 3 multisubunit complexes succinate dehydrogenase (complex II, CII), ubiquinol-cytochrome c oxidoreductase (cytochrome b-c1 complex, complex III, CIII) and cytochrome c oxidase (complex IV, CIV), that cooperate to transfer electrons derived from NADH and succinate to molecular oxygen, creating an electrochemical gradient over the inner membrane that drives transmembrane transport and the ATP synthase. Cytochrome c oxidase is the component of the respiratory chain that catalyzes the reduction of oxygen to water. Electrons originating from reduced cytochrome c in the intermembrane space (IMS) are transferred via the dinuclear copper A center (CU(A)) of subunit 2 and heme A of subunit 1 to the active site in subunit 1, a binuclear center (BNC) formed by heme A3 and copper B (CU(B)). The BNC reduces molecular oxygen to 2 water molecules using 4 electrons from cytochrome c in the IMS and 4 protons from the mitochondrial matrix. The sequence is that of Cytochrome c oxidase subunit 2 (MT-CO2) from Lycalopex sechurae (Sechuran desert fox).